The sequence spans 154 residues: MVKAVAVLRGSAGVSGVVTLEQASEQDPTTITYEIAGNDPNAERGFHIHEFGDVTNGCVSAGPHFNPFKKTHGAPQDENRHVGDLGNIKTDAQGVAKGVITDSLVKLIGPTSVVGRSVVVHAGTDDLGKGGNEESLKTGNAGPRPACGVIGLTN.

Cu cation is bound by residues His47, His49, and His64. The cysteines at positions 58 and 147 are disulfide-linked. The Zn(2+) site is built by His64, His72, His81, and Asp84. His121 serves as a coordination point for Cu cation. Positions 125–136 (DDLGKGGNEESL) are enriched in basic and acidic residues. The disordered stretch occupies residues 125-144 (DDLGKGGNEESLKTGNAGPR). Arg144 contributes to the substrate binding site.

It belongs to the Cu-Zn superoxide dismutase family. Homodimer. The cofactor is Cu cation. Requires Zn(2+) as cofactor.

It is found in the cytoplasm. It carries out the reaction 2 superoxide + 2 H(+) = H2O2 + O2. Destroys radicals which are normally produced within the cells and which are toxic to biological systems. This is Superoxide dismutase [Cu-Zn] (SOD1) from Candida glabrata (strain ATCC 2001 / BCRC 20586 / JCM 3761 / NBRC 0622 / NRRL Y-65 / CBS 138) (Yeast).